Reading from the N-terminus, the 192-residue chain is Erythropoietin (192 aa).

An N-terminal signal peptide occupies residues 1–26; it reads MGVPERPTLLLLLSLLLIPLGLPVLC. A disulfide bridge connects residues Cys33 and Cys187. Asn50, Asn64, and Asn109 each carry an N-linked (GlcNAc...) asparagine glycan.

The protein belongs to the EPO/TPO family. In terms of tissue distribution, produced by kidney or liver of adult mammals and by liver of fetal or neonatal mammals.

Its subcellular location is the secreted. In terms of biological role, hormone involved in the regulation of erythrocyte proliferation and differentiation and the maintenance of a physiological level of circulating erythrocyte mass. Binds to EPOR leading to EPOR dimerization and JAK2 activation thereby activating specific downstream effectors, including STAT1 and STAT3. The protein is Erythropoietin (Epo) of Mus musculus (Mouse).